The sequence spans 867 residues: Ataxin-7 (867 aa).

Residues 1–15 (MSERAADDVRGEPRR) are compositionally biased toward basic and acidic residues. The interval 1–59 (MSERAADDVRGEPRRAAGGAAAARQQQQQPQPLQPQRQHPPLRRPRAEDGGTGDTTTSA) is disordered. Low complexity predominate over residues 16–39 (AAGGAAAARQQQQQPQPLQPQRQH). Residue Lys-222 is modified to N6-acetyllysine. A Glycyl lysine isopeptide (Lys-Gly) (interchain with G-Cter in SUMO); alternate cross-link involves residue Lys-243. Lys-243 is covalently cross-linked (Glycyl lysine isopeptide (Lys-Gly) (interchain with G-Cter in SUMO2); alternate). Positions 320 to 387 (KRLSEREFDP…KAREKELIRH (68 aa)) constitute an SCA7 domain. Positions 379–400 (AREKELIRHDSQQVPHPLRDPH) are enriched in basic and acidic residues. Disordered regions lie at residues 379–483 (AREK…EESV), 600–711 (HGTT…SHSV), and 845–867 (TGNISGAQGLTNNSLLHQPKARP). 2 stretches are compositionally biased toward pro residues: residues 426–437 (PQTPSLPRPPGC) and 447–462 (IDPPPGQESPHPPLPA). Positions 472–481 (EEGEGDDREE) are enriched in acidic residues. Low complexity predominate over residues 619 to 647 (SVQSRQVSASSSPPSTPSGLSSVPSSPLS). The segment covering 649 to 659 (KPQKWKPSKSI) has biased composition (basic residues). The span at 665 to 674 (SALSTNCHNA) shows a compositional bias: polar residues. Residues 689 to 711 (SSPLLVPSSSSSSSSSSSSSHSV) show a composition bias toward low complexity. A compositionally biased stretch (polar residues) spans 846 to 860 (GNISGAQGLTNNSLL).

This sequence belongs to the ataxin-7 family. Component of the SAGA transcription coactivator-HAT complex, at least composed of SUPT3H, GCN5L2, TAF5L, TAF6L, SUPT7L, TADA3L, TAD1L, TAF10, TAF12, TRRAP, TAF9 and ATXN7. The STAGA core complex is associated with a subcomplex required for histone deubiquitination composed of ATXN7L3, ENY2 and USP22. Interacts with SORBS1, PSMC1 and CRX. Interacts with TRRAP, GCN5L2 and TAF10. Interacts with alpha tubulin. Post-translationally, proteolytically cleaved by caspase-7 (CASP7). In terms of processing, sumoylation has no effect on subcellular location or interaction with components of the STAGA complex. In terms of tissue distribution, widely expressed in adult tissues, with the highest expression in heart, brain, liver and kidney.

The protein resides in the nucleus. It localises to the nucleolus. The protein localises to the nucleus matrix. It is found in the cytoplasm. Its subcellular location is the cytoskeleton. Functionally, acts as a component of the SAGA (aka STAGA) transcription coactivator-HAT complex. Mediates the interaction of SAGA complex with the CRX and is involved in CRX-dependent gene activation. Probably involved in tethering the deubiquitination module within the SAGA complex. Necessary for microtubule cytoskeleton stabilization. Involved in neurodegeneration. The protein is Ataxin-7 (Atxn7) of Mus musculus (Mouse).